A 946-amino-acid polypeptide reads, in one-letter code: Protein translocase subunit SecA (946 aa).

ATP is bound by residues Gln87, 105–109 (GEGKT), and Asp524. Residues 904–933 (PAQTTDKADRDPNKPETWGKVGRNEDCPCG) are disordered. Cys930, Cys932, Cys941, and His942 together coordinate Zn(2+).

Belongs to the SecA family. As to quaternary structure, monomer and homodimer. Part of the essential Sec protein translocation apparatus which comprises SecA, SecYEG and auxiliary proteins SecDF-YajC and YidC. Requires Zn(2+) as cofactor.

It localises to the cell inner membrane. It is found in the cytoplasm. It catalyses the reaction ATP + H2O + cellular proteinSide 1 = ADP + phosphate + cellular proteinSide 2.. Part of the Sec protein translocase complex. Interacts with the SecYEG preprotein conducting channel. Has a central role in coupling the hydrolysis of ATP to the transfer of proteins into and across the cell membrane, serving both as a receptor for the preprotein-SecB complex and as an ATP-driven molecular motor driving the stepwise translocation of polypeptide chains across the membrane. The polypeptide is Protein translocase subunit SecA (Rhodopseudomonas palustris (strain TIE-1)).